Here is a 143-residue protein sequence, read N- to C-terminus: Competence protein ComGD (143 aa).

The propeptide occupies 1–10; the sequence is MNIKLNEEKG. The residue at position 11 (Phe11) is an N-methylphenylalanine. A helical transmembrane segment spans residues 11–31; the sequence is FTLLESLLVLSLASILLVAVF.

The transformation pili are flexible filaments, consisting mainly of the major pilin ComGC and smaller amounts of the minor pilins, including at least ComGD, ComGF and ComGG. Interacts with ComGF. Interacts with ComGG. In terms of processing, processing of ComGD in competent cells requires ComC.

The protein resides in the cell membrane. It localises to the cell surface. Functionally, required for formation of the type IV-like pilus (T4P) that plays a role in transformation. Transformation pili are dynamically extended and retracted, perhaps thereby promoting DNA uptake and transformation. Required for transformation and DNA binding. This Bacillus subtilis (strain 168) protein is Competence protein ComGD (comGD).